Consider the following 305-residue polypeptide: ATP synthase gamma chain (305 aa).

This sequence belongs to the ATPase gamma chain family. In terms of assembly, F-type ATPases have 2 components, CF(1) - the catalytic core - and CF(0) - the membrane proton channel. CF(1) has five subunits: alpha(3), beta(3), gamma(1), delta(1), epsilon(1). CF(0) has three main subunits: a, b and c.

The protein resides in the cell membrane. Produces ATP from ADP in the presence of a proton gradient across the membrane. The gamma chain is believed to be important in regulating ATPase activity and the flow of protons through the CF(0) complex. This Mycobacterium tuberculosis (strain ATCC 25177 / H37Ra) protein is ATP synthase gamma chain.